A 391-amino-acid polypeptide reads, in one-letter code: Secreted aspartic protease 1 (391 aa).

The first 18 residues, 1 to 18 (MFLKNIFIALAIALLVDA), serve as a signal peptide directing secretion. Positions 19-50 (SPAKRSPGFVTLDFDVIKTPVNATGQEGKVKR) are cleaved as a propeptide — activation peptide. Asn40 carries N-linked (GlcNAc...) asparagine glycosylation. One can recognise a Peptidase A1 domain in the interval 64–377 (YAADITIGSN…DLDDDKISLA (314 aa)). The active site involves Asp82. 82–84 (DTG) is a pepstatin A binding site. An intrachain disulfide couples Cys97 to Cys109. Residues Asp241 and Asp263 each coordinate Zn(2+). Asp267 is an active-site residue. Residue 267 to 271 (DSGTT) participates in pepstatin A binding. The cysteines at positions 305 and 343 are disulfide-linked.

It belongs to the peptidase A1 family. Monomer.

The protein localises to the secreted. It carries out the reaction Preferential cleavage at the carboxyl of hydrophobic amino acids, but fails to cleave 15-Leu-|-Tyr-16, 16-Tyr-|-Leu-17 and 24-Phe-|-Phe-25 of insulin B chain. Activates trypsinogen, and degrades keratin.. Its activity is regulated as follows. Inhibited by pepstatin A analogs and squash aspartic peptidase inhibitor (SQAPI). Functionally, secreted aspartic peptidases (SAPs) are a group of ten acidic hydrolases considered as key virulence factors. These enzymes supply the fungus with nutrient amino acids as well as are able to degrade the selected host's proteins involved in the immune defense. Induces host inflammatory cytokine production in a proteolytic activity-independent way. Plays a role in tissue damage during superficial infection. Moreover, acts toward human hemoglobin though limited proteolysis to generate a variety of antimicrobial hemocidins, enabling to compete with the other microorganisms of the same physiological niche using the microbicidal peptides generated from the host protein. In terms of biological role, plays a key role in defense against host by cleaving histatin-5 (Hst 5), a peptide from human saliva that carries out fungicidal activity. The cleavage rate decreases in an order of SAP2 &gt; SAP9 &gt; SAP3 &gt; SAP7 &gt; SAP4 &gt; SAP1 &gt; SAP8. The first cleavage occurs between residues 'Lys-17' and 'His-18' of Hst 5, giving DSHAKRHHGYKRKFHEK and HHSHRGY peptides. Further fragmentation by SAP1 results in AKRHHGYKRKFHEK and AKRHHGY products. This Candida albicans (Yeast) protein is Secreted aspartic protease 1.